The chain runs to 224 residues: Holliday junction branch migration complex subunit RuvA (224 aa).

Residues 1–67 (MISWLKGEKV…EDGTSLYGFI (67 aa)) are domain I. The segment at 68–146 (EVNQRDLFRE…RFTDNDKTIH (79 aa)) is domain II. The interval 147–155 (ENKKGIEAN) is flexible linker. The tract at residues 156 to 224 (QFSKYIDEIY…ILMKLSEKTT (69 aa)) is domain III.

Belongs to the RuvA family. Homotetramer. Forms an RuvA(8)-RuvB(12)-Holliday junction (HJ) complex. HJ DNA is sandwiched between 2 RuvA tetramers; dsDNA enters through RuvA and exits via RuvB. An RuvB hexamer assembles on each DNA strand where it exits the tetramer. Each RuvB hexamer is contacted by two RuvA subunits (via domain III) on 2 adjacent RuvB subunits; this complex drives branch migration. In the full resolvosome a probable DNA-RuvA(4)-RuvB(12)-RuvC(2) complex forms which resolves the HJ.

The protein resides in the cytoplasm. In terms of biological role, the RuvA-RuvB-RuvC complex processes Holliday junction (HJ) DNA during genetic recombination and DNA repair, while the RuvA-RuvB complex plays an important role in the rescue of blocked DNA replication forks via replication fork reversal (RFR). RuvA specifically binds to HJ cruciform DNA, conferring on it an open structure. The RuvB hexamer acts as an ATP-dependent pump, pulling dsDNA into and through the RuvAB complex. HJ branch migration allows RuvC to scan DNA until it finds its consensus sequence, where it cleaves and resolves the cruciform DNA. In Prochlorococcus marinus (strain NATL1A), this protein is Holliday junction branch migration complex subunit RuvA.